Consider the following 264-residue polypeptide: Thymidylate synthase (264 aa).

Arginine 21 contacts dUMP. Histidine 51 lines the (6R)-5,10-methylene-5,6,7,8-tetrahydrofolate pocket. Residue arginine 126–arginine 127 participates in dUMP binding. Cysteine 146 functions as the Nucleophile in the catalytic mechanism. Residues arginine 166–aspartate 169, asparagine 177, and histidine 207–tyrosine 209 contribute to the dUMP site. Aspartate 169 is a binding site for (6R)-5,10-methylene-5,6,7,8-tetrahydrofolate. Alanine 263 is a binding site for (6R)-5,10-methylene-5,6,7,8-tetrahydrofolate.

Belongs to the thymidylate synthase family. Bacterial-type ThyA subfamily. In terms of assembly, homodimer.

It localises to the cytoplasm. The catalysed reaction is dUMP + (6R)-5,10-methylene-5,6,7,8-tetrahydrofolate = 7,8-dihydrofolate + dTMP. It participates in pyrimidine metabolism; dTTP biosynthesis. Its function is as follows. Catalyzes the reductive methylation of 2'-deoxyuridine-5'-monophosphate (dUMP) to 2'-deoxythymidine-5'-monophosphate (dTMP) while utilizing 5,10-methylenetetrahydrofolate (mTHF) as the methyl donor and reductant in the reaction, yielding dihydrofolate (DHF) as a by-product. This enzymatic reaction provides an intracellular de novo source of dTMP, an essential precursor for DNA biosynthesis. The chain is Thymidylate synthase from Brucella ovis (strain ATCC 25840 / 63/290 / NCTC 10512).